Consider the following 337-residue polypeptide: Inositol 2-dehydrogenase (337 aa).

This sequence belongs to the Gfo/Idh/MocA family. As to quaternary structure, homotetramer.

It carries out the reaction myo-inositol + NAD(+) = scyllo-inosose + NADH + H(+). Functionally, involved in the oxidation of myo-inositol (MI) to 2-keto-myo-inositol (2KMI or 2-inosose). This is Inositol 2-dehydrogenase from Klebsiella pneumoniae (strain 342).